Reading from the N-terminus, the 129-residue chain is Glycine cleavage system H protein (129 aa).

The 83-residue stretch at 24-106 (TFTVGITEHA…FGDGWLFRIK (83 aa)) folds into the Lipoyl-binding domain. An N6-lipoyllysine modification is found at Lys-65.

The protein belongs to the GcvH family. The glycine cleavage system is composed of four proteins: P, T, L and H. (R)-lipoate is required as a cofactor.

Functionally, the glycine cleavage system catalyzes the degradation of glycine. The H protein shuttles the methylamine group of glycine from the P protein to the T protein. The sequence is that of Glycine cleavage system H protein from Pseudoalteromonas translucida (strain TAC 125).